A 426-amino-acid chain; its full sequence is Actin-like protein 6B (426 aa).

An essential for mediating its function in dendritic development; may contribute to neuronal-specific targeting region spans residues 39–82; it reads TTVGLLAAEEGGGLELEGEKEKKGKIFHIDTNALHVPRDGAEVM.

The protein belongs to the actin family. As to quaternary structure, component of the multiprotein chromatin-remodeling complexes SWI/SNF: SWI/SNF-A (BAF), SWI/SNF-B (PBAF) and related complexes. The canonical complex contains a catalytic subunit (either SMARCA4/BRG1/BAF190A or SMARCA2/BRM/BAF190B) and at least SMARCE1, ACTL6A/BAF53, SMARCC1/BAF155, SMARCC2/BAF170, and SMARCB1/SNF5/BAF47. Other subunits specific to each of the complexes may also be present permitting several possible combinations developmentally and tissue specific. Component of the BAF complex, which includes at least actin (ACTB), ARID1A/BAF250A, ARID1B/BAF250B, SMARCA2/BRM, SMARCA4/BRG1/BAF190A, ACTL6A/BAF53, ACTL6B/BAF53B, SMARCE1/BAF57, SMARCC1/BAF155, SMARCC2/BAF170, SMARCB1/SNF5/INI1, and one or more SMARCD1/BAF60A, SMARCD2/BAF60B, or SMARCD3/BAF60C. Component of neuron-specific chromatin remodeling complex (nBAF complex) composed of at least, ARID1A/BAF250A or ARID1B/BAF250B, SMARCD1/BAF60A or SMARCD2/BAF60B or SMARCD3/BAF60C, SMARCA2/BRM/BAF190B, SMARCA4/BRG1/BAF190A, SMARCB1/BAF47, SMARCC1/BAF155, SMARCE1/BAF57, SMARCC2/BAF170, DPF1/BAF45B, DPF3/BAF45C, ACTL6B/BAF53B and actin (ACTB). Note that the nBAF complex is polymorphic in regard to the ATPase, SMARCA2 and SMARCA4 occupying mutually exclusive positions. May be a component of the SWI/SNF-B (PBAF) chromatin remodeling complex, at least composed of SMARCA4/BRG1, SMARCB1/BAF47/SNF5, ACTL6A/BAF53A or ACTL6B/BAF53B, SMARCE1/BAF57, SMARCD1/BAF60A, SMARCD2/BAF60B, perhaps SMARCD3/BAF60C, SMARCC1/BAF155, SMARCC2/BAF170, PBRM1/BAF180, ARID2/BAF200 and actin.

The protein localises to the nucleus. Its function is as follows. Involved in transcriptional activation and repression of select genes by chromatin remodeling (alteration of DNA-nucleosome topology). Component of SWI/SNF chromatin remodeling complexes that carry out key enzymatic activities, changing chromatin structure by altering DNA-histone contacts within a nucleosome in an ATP-dependent manner. Belongs to the neuron-specific chromatin remodeling complex (nBAF complex), as such plays a role in remodeling mononucleosomes in an ATP-dependent fashion, and is required for postmitotic neural development and dendritic outgrowth. During neural development a switch from a stem/progenitor to a postmitotic chromatin remodeling mechanism occurs as neurons exit the cell cycle and become committed to their adult state. The transition from proliferating neural stem/progenitor cells to postmitotic neurons requires a switch in subunit composition of the npBAF and nBAF complexes. As neural progenitors exit mitosis and differentiate into neurons, npBAF complexes which contain ACTL6A/BAF53A and PHF10/BAF45A, are exchanged for homologous alternative ACTL6B/BAF53B and DPF1/BAF45B or DPF3/BAF45C subunits in neuron-specific complexes (nBAF). The npBAF complex is essential for the self-renewal/proliferative capacity of the multipotent neural stem cells. The nBAF complex along with CREST plays a role regulating the activity of genes essential for dendrite growth. ACTL6B/BAF53B is not essential for assembly of the nBAF complex but is required for targeting the complex and CREST to the promoter of genes essential for dendritic growth. Essential for neuronal maturation and dendrite development. This is Actin-like protein 6B (ACTL6B) from Bos taurus (Bovine).